Here is a 348-residue protein sequence, read N- to C-terminus: GTPase Obg (348 aa).

The region spanning 1–159 is the Obg domain; sequence MKFLDQARIY…MTLWLRLKLI (159 aa). An OBG-type G domain is found at 160 to 327; the sequence is ADAGLVGLPN…TLQSLLAAID (168 aa). Residues 166-173, 191-195, 212-215, 279-282, and 308-310 contribute to the GTP site; these read GLPNAGKS, FTTLH, DIPG, SKID, and SAA. The Mg(2+) site is built by S173 and T193.

The protein belongs to the TRAFAC class OBG-HflX-like GTPase superfamily. OBG GTPase family. In terms of assembly, monomer. The cofactor is Mg(2+).

It localises to the cytoplasm. Its function is as follows. An essential GTPase which binds GTP, GDP and possibly (p)ppGpp with moderate affinity, with high nucleotide exchange rates and a fairly low GTP hydrolysis rate. Plays a role in control of the cell cycle, stress response, ribosome biogenesis and in those bacteria that undergo differentiation, in morphogenesis control. The sequence is that of GTPase Obg from Beijerinckia indica subsp. indica (strain ATCC 9039 / DSM 1715 / NCIMB 8712).